We begin with the raw amino-acid sequence, 153 residues long: Natriuretic peptides A (153 aa).

The signal sequence occupies residues 1 to 25; it reads MGSFSTITASFLLFLACQLLWQTGA. 2 propeptides span residues 26-123 and 93-103; these read NPVY…AAPR and DGGALGRGSWD. The tract at residues 62–104 is disordered; it reads VLSEQNEEAGAALSPLPEVPPWAGEVNPAQRDGGALGRGSWDS. Residue S129 is modified to Phosphoserine. A disulfide bridge connects residues C130 and C146. The tract at residues 147–151 is important for degradation of atrial natriuretic peptide by IDE; it reads NSFRY.

Belongs to the natriuretic peptide family. Homodimer; disulfide-linked antiparallel dimer. The precursor molecule is proteolytically cleaved by CORIN at Arg-123 to produce the atrial natriuretic peptide. Undergoes further proteolytic cleavage by unknown proteases to give rise to long-acting natriuretic peptide, vessel dilator and kaliuretic peptide. Additional processing gives rise to the auriculin and atriopeptin peptides. In the kidneys, alternative processing by an unknown protease results in the peptide urodilatin. Post-translationally, cleavage by MME initiates degradation of the factor and thereby regulates its activity. Degradation by IDE results in reduced activation of NPR1 (in vitro). During IDE degradation, the resulting products can temporarily stimulate NPR2 to produce cGMP, before the fragments are completely degraded and inactivated by IDE (in vitro). In terms of processing, degraded by IDE. Phosphorylation on Ser-129 decreases vasorelaxant activity.

The protein resides in the secreted. It localises to the perikaryon. It is found in the cell projection. In terms of biological role, hormone that plays a key role in mediating cardio-renal homeostasis, and is involved in vascular remodeling and regulating energy metabolism. Acts by specifically binding and stimulating NPR1 to produce cGMP, which in turn activates effector proteins, such as PRKG1, that drive various biological responses. Regulates vasodilation, natriuresis, diuresis and aldosterone synthesis and is therefore essential for regulating blood pressure, controlling the extracellular fluid volume and maintaining the fluid-electrolyte balance. Also involved in inhibiting cardiac remodeling and cardiac hypertrophy by inducing cardiomyocyte apoptosis and attenuating the growth of cardiomyocytes and fibroblasts. Plays a role in female pregnancy by promoting trophoblast invasion and spiral artery remodeling in uterus, and thus prevents pregnancy-induced hypertension. In adipose tissue, acts in various cGMP- and PKG-dependent pathways to regulate lipid metabolism and energy homeostasis. This includes up-regulating lipid metabolism and mitochondrial oxygen utilization by activating the AMP-activated protein kinase (AMPK), and increasing energy expenditure by acting via MAPK11 to promote the UCP1-dependent thermogenesis of brown adipose tissue. Binds the clearance receptor NPR3 which removes the hormone from circulation. Its function is as follows. May have a role in cardio-renal homeostasis through regulation of natriuresis, diuresis, vasodilation, and inhibiting aldosterone synthesis. In vitro, promotes the production of cGMP and induces vasodilation. May promote natriuresis, at least in part, by enhancing prostaglandin E2 synthesis resulting in the inhibition of renal Na+-K+-ATPase. However reports on the involvement of this peptide in mammal blood volume and blood pressure homeostasis are conflicting; according to a report, in vivo it is not sufficient to activate cGMP and does not inhibit collecting duct transport nor effect diuresis and natriuresis. Appears to bind to specific receptors that are distinct from the receptors bound by atrial natriuretic peptide and vessel dilator. Possibly enhances protein excretion in urine by decreasing proximal tubular protein reabsorption. May have a role in cardio-renal homeostasis through regulation of natriuresis, diuresis, and vasodilation. In vitro, promotes the production of cGMP and induces vasodilation. May promote natriuresis, at least in part, by enhancing prostaglandin E2 synthesis resulting in the inhibition of renal Na+-K+-ATPase. However reports on the involvement of this peptide in mammal blood volume and blood pressure homeostasis are conflicting; according to a report it is not sufficient to activate cGMP and does not inhibit collecting duct transport nor effect diuresis and natriuresis. Appears to bind to specific receptors that are distinct from the receptors bound by the atrial natriuretic and long-acting natriuretic peptides. Possibly functions in protein excretion in urine by maintaining the integrity of the proximal tubules and enhancing protein excretion by decreasing proximal tubular protein reabsorption. Functionally, may have a role in cardio-renal homeostasis through regulation of diuresis and inhibiting aldosterone synthesis. In vitro, promotes the production of cGMP and induces vasodilation. May promote natriuresis, at least in part, by enhancing prostaglandin E2 synthesis resulting in the inhibition of renal Na+-K+-ATPase. May have a role in potassium excretion but not sodium excretion (natriuresis). Possibly enhances protein excretion in urine by decreasing proximal tubular protein reabsorption. In terms of biological role, hormone produced in the kidneys that appears to be important for maintaining cardio-renal homeostasis. Mediates vasodilation, natriuresis and diuresis primarily in the renal system, in order to maintain the extracellular fluid volume and control the fluid-electrolyte balance. Specifically binds and stimulates cGMP production by renal transmembrane receptors, likely NPR1. Urodilatin not ANP, may be the natriuretic peptide responsible for the regulation of sodium and water homeostasis in the kidney. Its function is as follows. May have a role in cardio-renal homeostasis through regulation of natriuresis and vasodilation. In vivo promotes natriuresis and in vitro, vasodilates renal artery strips. May have a role in cardio-renal homeostasis through regulation of regulation of natriuresis and vasodilation. In vivo promotes natriuresis. In vitro, vasodilates intestinal smooth muscle but not smooth muscle strips. Functionally, may have a role in cardio-renal homeostasis through regulation of natriuresis and vasodilation. In vivo promotes natriuresis. In vitro, selectively vasodilates intestinal and vascular smooth muscle strips. In terms of biological role, may have a role in cardio-renal homeostasis through regulation of natriuresis and vasodilation. In vivo promotes natriuresis. In vitro, selectively vasodilates intestinal smooth muscle but not vascular smooth muscle strips. This is Natriuretic peptides A (NPPA) from Felis catus (Cat).